The primary structure comprises 88 residues: Small ribosomal subunit protein eS21 (88 aa).

This sequence belongs to the eukaryotic ribosomal protein eS21 family. In terms of assembly, component of the 40S small ribosomal subunit.

The protein resides in the cytoplasm. It is found in the cytosol. Its subcellular location is the rough endoplasmic reticulum. The polypeptide is Small ribosomal subunit protein eS21 (rps-21) (Caenorhabditis elegans).